Here is a 176-residue protein sequence, read N- to C-terminus: Ribosome rescue factor SmrB (176 aa).

Residues leucine 98 to glutamate 173 form the Smr domain.

This sequence belongs to the SmrB family. In terms of assembly, associates with collided ribosomes, but not with correctly translating polysomes.

Its function is as follows. Acts as a ribosome collision sensor. Detects stalled/collided disomes (pairs of ribosomes where the leading ribosome is stalled and a second ribosome has collided with it) and endonucleolytically cleaves mRNA at the 5' boundary of the stalled ribosome. Stalled/collided disomes form a new interface (primarily via the 30S subunits) that binds SmrB. Cleaved mRNA becomes available for tmRNA ligation, leading to ribosomal subunit dissociation and rescue of stalled ribosomes. The protein is Ribosome rescue factor SmrB of Yersinia enterocolitica serotype O:8 / biotype 1B (strain NCTC 13174 / 8081).